The sequence spans 206 residues: LexA repressor (206 aa).

The segment at residues R28–K48 is a DNA-binding region (H-T-H motif). Active-site for autocatalytic cleavage activity residues include S123 and K160.

This sequence belongs to the peptidase S24 family. In terms of assembly, homodimer.

It carries out the reaction Hydrolysis of Ala-|-Gly bond in repressor LexA.. Its function is as follows. Represses a number of genes involved in the response to DNA damage (SOS response), including recA and lexA. In the presence of single-stranded DNA, RecA interacts with LexA causing an autocatalytic cleavage which disrupts the DNA-binding part of LexA, leading to derepression of the SOS regulon and eventually DNA repair. This is LexA repressor from Shewanella pealeana (strain ATCC 700345 / ANG-SQ1).